The sequence spans 161 residues: Cyclic pyranopterin monophosphate synthase (161 aa).

Substrate-binding positions include 75–77 (MCH) and 115–116 (ME). Residue Asp-130 is part of the active site.

Belongs to the MoaC family. As to quaternary structure, homohexamer; trimer of dimers.

The enzyme catalyses (8S)-3',8-cyclo-7,8-dihydroguanosine 5'-triphosphate = cyclic pyranopterin phosphate + diphosphate. Its pathway is cofactor biosynthesis; molybdopterin biosynthesis. Its function is as follows. Catalyzes the conversion of (8S)-3',8-cyclo-7,8-dihydroguanosine 5'-triphosphate to cyclic pyranopterin monophosphate (cPMP). The protein is Cyclic pyranopterin monophosphate synthase of Bacillus cereus (strain 03BB102).